A 122-amino-acid polypeptide reads, in one-letter code: Conotoxin flf14.2 (122 aa).

The first 22 residues, Met-1 to Ser-22, serve as a signal peptide directing secretion. A propeptide spanning residues Glu-23–Trp-96 is cleaved from the precursor. The tract at residues Arg-53–Val-91 is disordered. Over residues Arg-62 to Glu-85 the composition is skewed to basic and acidic residues. Disulfide bonds link Cys-101–Cys-121 and Cys-105–Cys-117.

This sequence belongs to the conotoxin R superfamily. Expressed by the venom duct.

The protein resides in the secreted. The sequence is that of Conotoxin flf14.2 from Conus anabathrum floridanus (Florida cone).